We begin with the raw amino-acid sequence, 147 residues long: Transthyretin (147 aa).

An N-terminal signal peptide occupies residues 1–20; the sequence is MASRRLLLLCLAGLVLVTEA. At C30 the chain carries Sulfocysteine. An L-thyroxine-binding site is contributed by K35. E62 carries the 4-carboxyglutamate modification. E74 contributes to the L-thyroxine binding site. The N-linked (GlcNAc...) asparagine glycan is linked to N118. S137 provides a ligand contact to L-thyroxine.

Belongs to the transthyretin family. As to quaternary structure, homotetramer. Dimer of dimers. In the homotetramer, subunits assemble around a central channel that can accommodate two ligand molecules. Interacts with RBP4. Sulfonation of the reactive cysteine Cys-30 enhances the stability of the native conformation of TTR, avoiding misassembly of the protein leading to amyloid formation. Detected in serum (at protein level). Detected in liver.

The protein resides in the secreted. In terms of biological role, thyroid hormone-binding protein. Probably transports thyroxine from the bloodstream to the brain. This Sorex araneus (Eurasian common shrew) protein is Transthyretin (TTR).